The primary structure comprises 1392 residues: ENHANCER OF AG-4 protein 2 (1392 aa).

The region spanning 20–77 (LGDLVLAKVKGFPAWPAKISRPEDWDRAPDPKKYFVQFFGTEEIAFVAPPDIQAFTSE) is the PWWP domain. Over residues 184 to 194 (ESKVKTTSPVS) the composition is skewed to polar residues. Disordered regions lie at residues 184–354 (ESKV…STGT), 384–428 (KRQR…PAAQ), 575–613 (KKPQSDSCKEAVAGSDKISSSQSQPANQRHKSASVGERL), and 723–766 (QGHH…GGSL). Basic and acidic residues-rich tracts occupy residues 196 to 215 (SLEHSSFDPKIKKEDFDKGT), 239 to 258 (KEAGGSDRKGEDTVHRDKSN), and 311 to 345 (LESEQGKLAPRVDESSRAAKKPRCESADNKVKCEI). The span at 391–400 (EHATSPSFSG) shows a compositional bias: polar residues. The span at 401-417 (SRDKSGKGHLEQKDRSS) shows a compositional bias: basic and acidic residues. 2 stretches are compositionally biased toward polar residues: residues 591 to 601 (KISSSQSQPAN) and 725 to 744 (HHQQGSSPSNHGHQSLSRNQ). A CID domain is found at 771 to 912 (EAAISRDAFE…RYIDDIRASG (142 aa)). Disordered stretches follow at residues 957–986 (FFSSHNFEDDEEDDDLPTSQKEKSTSAGER), 1014–1356 (LEME…NYQP), and 1369–1392 (PGHTAPQMLPSRPDIPTVNCWRPA). Positions 1059–1129 (EDSPPLPQES…SPPPPPPPPS (71 aa)) are enriched in pro residues. A compositionally biased stretch (polar residues) spans 1157-1175 (LSHQTYPGSMQQDRSSIFT). A compositionally biased stretch (low complexity) spans 1215–1225 (SSREPSSFTSS). 2 stretches are compositionally biased toward polar residues: residues 1240 to 1255 (EASSQNHRFQPSTPLS) and 1265 to 1284 (APSSHFSYPSHIQSQSQHSY). A compositionally biased stretch (basic and acidic residues) spans 1293 to 1306 (QRDDARRYRNEEPW). Residues 1311 to 1320 (SGHSAENQNG) show a composition bias toward polar residues.

In terms of tissue distribution, expressed in the inflorescence meristem, floral primordia, inflorescence stem, and floral pedicels. Also detected in the shoot apical meristem, stems, leaves, embryos, and roots.

Its subcellular location is the nucleus. In terms of biological role, transcription factor that functions as a repressor of flowering by enhancing the expression of several genes that delay flowering including FLC, FLM/MAF1, MAF2 and SVP. Also acts in the floral homeotic AGAMOUS (AG) pathway, specifically by processing the AGAMOUS pre-mRNA. Functions in association with HUA1 and HEN4 in AG pre-mRNA processing. Involved in all three aspects of the AG functions, the specification of stamen and carpel identities, the control of floral determinacy, and the spatial restriction of AP1 expression. Acts as a transcription regulator that controls anthocyanin accumulation. The sequence is that of ENHANCER OF AG-4 protein 2 from Arabidopsis thaliana (Mouse-ear cress).